We begin with the raw amino-acid sequence, 459 residues long: Argininosuccinate lyase (459 aa).

It belongs to the lyase 1 family. Argininosuccinate lyase subfamily.

The protein resides in the cytoplasm. The enzyme catalyses 2-(N(omega)-L-arginino)succinate = fumarate + L-arginine. The protein operates within amino-acid biosynthesis; L-arginine biosynthesis; L-arginine from L-ornithine and carbamoyl phosphate: step 3/3. This chain is Argininosuccinate lyase, found in Geobacillus thermodenitrificans (strain NG80-2).